A 358-amino-acid chain; its full sequence is MNQVRKWNIIGGRVIKTGIAVFLTVLVCEFFNIPTIFAVITAIVTIEPTATDSIKKGLVRFPASTIGSAYAMTFTFFLGHQALSYALAAMFTIVTCQKLRLHAGTLVATLTAVAMIPITADHYFTAFLIRLATTSTGIIVSTVVNFFILPPHYVKTISGCTEELFVKTANVMEEWLTALMDGKVIKKETTYNLSKLTVLLHKAVQFVQYEQKDWKYHRHTKKEMRSFLLVQKQLHLLQQIIYHIDNLARAPIETCDWSQNEKEILRRTIHSIISILRNHCEKIDEEHFKLIDELDKQFWTNKNDLAHCKPNQYHHHFSSESIILFEVLSIHDMLEELKQIFEKYEGENQEKSILVDIK.

4 consecutive transmembrane segments (helical) span residues 19–39 (IAVFLTVLVCEFFNIPTIFAV), 74–94 (FTFFLGHQALSYALAAMFTIV), 109–129 (TLTAVAMIPITADHYFTAFLI), and 131–151 (LATTSTGIIVSTVVNFFILPP).

Belongs to the UPF0421 family.

Its subcellular location is the cell membrane. The sequence is that of UPF0421 protein BT9727_2513 from Bacillus thuringiensis subsp. konkukian (strain 97-27).